We begin with the raw amino-acid sequence, 111 residues long: UPF0060 membrane protein Pden_1837 (111 aa).

The next 4 membrane-spanning stretches (helical) occupy residues 7 to 27 (IAVY…FWAW), 30 to 50 (LGKS…FAWL), 62 to 82 (AYAA…WLTE), and 91 to 111 (ILGG…PRAA).

This sequence belongs to the UPF0060 family.

It localises to the cell inner membrane. This chain is UPF0060 membrane protein Pden_1837, found in Paracoccus denitrificans (strain Pd 1222).